The sequence spans 259 residues: Bisphosphoglycerate mutase (259 aa).

Ser2 carries the N-acetylserine modification. Residues 10–17 (RHGEGAWN), 23–24 (CS), Arg62, 89–92 (ERHY), Arg100, and 116–117 (RR) each bind substrate. The active-site Tele-phosphohistidine intermediate is His11. Glu89 acts as the Proton donor/acceptor in catalysis. Thr122 is subject to Phosphothreonine. Residue 189–190 (GN) participates in substrate binding.

This sequence belongs to the phosphoglycerate mutase family. BPG-dependent PGAM subfamily. As to quaternary structure, homodimer. As to expression, expressed in red blood cells.

It carries out the reaction (2R)-3-phospho-glyceroyl phosphate = (2R)-2,3-bisphosphoglycerate + H(+). The enzyme catalyses (2R)-2-phosphoglycerate = (2R)-3-phosphoglycerate. Its activity is regulated as follows. At alkaline pH BPGM favors the synthase reaction; however, at lower pH the phosphatase reaction is dominant. Inhibited by citrate. In terms of biological role, plays a major role in regulating hemoglobin oxygen affinity by controlling the levels of its allosteric effector 2,3-bisphosphoglycerate (2,3-BPG). Also exhibits mutase (EC 5.4.2.11) activity. The polypeptide is Bisphosphoglycerate mutase (BPGM) (Oryctolagus cuniculus (Rabbit)).